Reading from the N-terminus, the 78-residue chain is Probable [Fe-S]-dependent transcriptional repressor (78 aa).

The iron-sulfur cluster site is built by Cys56, Cys61, Cys64, and Cys70.

This sequence belongs to the FeoC family.

Functionally, may function as a transcriptional regulator that controls feoABC expression. This chain is Probable [Fe-S]-dependent transcriptional repressor, found in Escherichia coli O9:H4 (strain HS).